The sequence spans 843 residues: Speckle targeted PIP5K1A-regulated poly(A) polymerase (843 aa).

The Matrin-type zinc-finger motif lies at phenylalanine 25–glutamate 55. Residues glutamate 54–serine 126 enclose the RRM domain. Residues proline 134 to glycine 146 are compositionally biased toward basic residues. The disordered stretch occupies residues proline 134 to glutamate 157. Serine 215 contacts ATP. Residues aspartate 226 and aspartate 228 each coordinate Mg(2+). Aspartate 226 and aspartate 228 together coordinate UTP. Positions valine 241–serine 255 are enriched in basic and acidic residues. A disordered region spans residues valine 241–leucine 292. Asparagine 354 serves as a coordination point for ATP. Positions 354, 376, 398, and 516 each coordinate UTP. In terms of domain architecture, PAP-associated spans serine 456–histidine 516. A KA1; binds the bulging loops of U6 snRNA but is dispensable for terminal uridylyltransferase activity region spans residues proline 564–glutamine 837. Positions glutamine 653–threonine 691 are disordered. A compositionally biased stretch (basic and acidic residues) spans glutamate 658 to glutamate 670.

Belongs to the DNA polymerase type-B-like family. As to quaternary structure, associates with the cleavage and polyadenylation specificity factor (CPSF) complex. The cofactor is Mg(2+). Mn(2+) serves as cofactor.

The protein resides in the nucleus. It localises to the nucleolus. The protein localises to the nucleus speckle. The catalysed reaction is RNA(n) + UTP = RNA(n)-3'-uridine ribonucleotide + diphosphate. It carries out the reaction RNA(n) + ATP = RNA(n)-3'-adenine ribonucleotide + diphosphate. Its function is as follows. Poly(A) polymerase that creates the 3'-poly(A) tail of specific pre-mRNAs. In addition to polyadenylation, it is also required for the 3'-end cleavage of pre-mRNAs: binds to the 3'UTR of targeted pre-mRNAs and promotes the recruitment and assembly of the CPSF complex on the 3'UTR of pre-mRNAs. In addition to adenylyltransferase activity, also has uridylyltransferase activity. However, the ATP ratio is higher than UTP in cells, suggesting that it functions primarily as a poly(A) polymerase. The sequence is that of Speckle targeted PIP5K1A-regulated poly(A) polymerase (tut1) from Xenopus tropicalis (Western clawed frog).